The primary structure comprises 625 residues: Mesothelin (625 aa).

The signal sequence occupies residues 1 to 35; the sequence is MALPTAQPLLGSCGSPICSRSFLLLLLSLGWLPLL. At Ser-202 the chain carries Phosphoserine. A disulfide bond links Cys-304 and Cys-328. 3 N-linked (GlcNAc...) asparagine glycosylation sites follow: Asn-390, Asn-488, and Asn-517. Ser-600 is lipidated: GPI-anchor amidated serine. A propeptide spans 601 to 625 (removed in mature form); sequence SGAPLLGPGFVFAWIPALLSALRLS.

It belongs to the mesothelin family. As to quaternary structure, interacts with MUC16. Post-translationally, proteolytically cleaved by a furin-like convertase to generate megakaryocyte-potentiating factor (MPF), and the cleaved form of mesothelin. In terms of tissue distribution, specifically expressed in lung. Overexpressed in hereditary renal carcinoma developed by Eker rats.

The protein resides in the cell membrane. Its subcellular location is the golgi apparatus. The protein localises to the secreted. In terms of biological role, membrane-anchored forms may play a role in cellular adhesion. Its function is as follows. Megakaryocyte-potentiating factor (MPF) may potentiate megakaryocyte colony formation. The polypeptide is Mesothelin (Msln) (Rattus norvegicus (Rat)).